We begin with the raw amino-acid sequence, 100 residues long: Urease subunit gamma (100 aa).

The protein belongs to the urease gamma subunit family. In terms of assembly, heterotrimer of UreA (gamma), UreB (beta) and UreC (alpha) subunits. Three heterotrimers associate to form the active enzyme.

The protein resides in the cytoplasm. The catalysed reaction is urea + 2 H2O + H(+) = hydrogencarbonate + 2 NH4(+). The protein operates within nitrogen metabolism; urea degradation; CO(2) and NH(3) from urea (urease route): step 1/1. The protein is Urease subunit gamma of Escherichia coli.